We begin with the raw amino-acid sequence, 411 residues long: Serine hydroxymethyltransferase (411 aa).

Residues Leu117 and 121–123 (GHL) contribute to the (6S)-5,6,7,8-tetrahydrofolate site. Lys226 bears the N6-(pyridoxal phosphate)lysine mark.

The protein belongs to the SHMT family. In terms of assembly, homodimer. The cofactor is pyridoxal 5'-phosphate.

The protein localises to the cytoplasm. The enzyme catalyses (6R)-5,10-methylene-5,6,7,8-tetrahydrofolate + glycine + H2O = (6S)-5,6,7,8-tetrahydrofolate + L-serine. It participates in one-carbon metabolism; tetrahydrofolate interconversion. Its pathway is amino-acid biosynthesis; glycine biosynthesis; glycine from L-serine: step 1/1. Catalyzes the reversible interconversion of serine and glycine with tetrahydrofolate (THF) serving as the one-carbon carrier. This reaction serves as the major source of one-carbon groups required for the biosynthesis of purines, thymidylate, methionine, and other important biomolecules. Also exhibits THF-independent aldolase activity toward beta-hydroxyamino acids, producing glycine and aldehydes, via a retro-aldol mechanism. The protein is Serine hydroxymethyltransferase of Syntrophobacter fumaroxidans (strain DSM 10017 / MPOB).